The primary structure comprises 1257 residues: Stromal processing peptidase, chloroplastic (1257 aa).

The N-terminal 142 residues, 1–142 (MAASTSTSSL…ASVKRVQLPH (142 aa)), are a transit peptide targeting the chloroplast. His236 is a binding site for Zn(2+). Catalysis depends on Glu239, which acts as the Proton acceptor. His240 provides a ligand contact to Zn(2+). Glu309 is a catalytic residue. Glu316 lines the Zn(2+) pocket. Positions 1233–1257 (EEAGEGYPGVLPMGRGLSTMTRPTT) are disordered.

This sequence belongs to the peptidase M16 family. Zn(2+) serves as cofactor.

It is found in the plastid. The protein resides in the chloroplast stroma. In terms of biological role, cleaves presequences (transit peptides) from chloroplastic protein precursors. Initially recognizes a precursor by binding to the C-terminus of its transit peptide and then removes the transit peptide in a single endoproteolytic step. In a next step, pursues the cleavage of transit peptide to a subfragment form. In Pisum sativum (Garden pea), this protein is Stromal processing peptidase, chloroplastic.